We begin with the raw amino-acid sequence, 649 residues long: Solute carrier family 22 member 16 (649 aa).

Residues 19–39 traverse the membrane as a helical segment; that stretch reads FQIVLYLICAYQSLSCGIHYL. Residues asparagine 65 and asparagine 108 are each glycosylated (N-linked (GlcNAc...) asparagine). Transmembrane regions (helical) follow at residues 156 to 176, 190 to 210, 214 to 234, 244 to 264, and 268 to 288; these read MIQP…SYLS, IGVF…SFMI, FLVM…MEII, IHLN…SYLL, and WLYQ…CWML. Asparagine 315 carries N-linked (GlcNAc...) asparagine glycosylation. 6 consecutive transmembrane segments (helical) span residues 356–376, 389–409, 417–437, 445–465, 475–495, and 501–521; these read AKMT…YYMF, LYLL…CIWL, TMLL…VMPS, MVAL…YLYT, CLAV…IPFT, and VWIF…GLLS. Polar residues predominate over residues 530–544; it reads TPMKSTWETTEQQVP. Disordered stretches follow at residues 530–560 and 579–649; these read TPMK…SFER and SPDA…LGGF.

It belongs to the major facilitator (TC 2.A.1) superfamily. Organic cation transporter (TC 2.A.1.19) family.

Its subcellular location is the cell membrane. The catalysed reaction is (R)-carnitine(in) = (R)-carnitine(out). It catalyses the reaction spermidine(in) = spermidine(out). Functionally, facilitative organic cation transporter that mediates the transport of carnitine as well as the polyamine spermidine. Mediates the partially Na(+)-dependent bidirectional transport of carnitine. May mediate L-carnitine secretion from testis epididymal epithelium into the lumen which is involved in the maturation of spermatozoa. This Mus musculus (Mouse) protein is Solute carrier family 22 member 16.